The sequence spans 298 residues: GTPase Era (298 aa).

Residues 7 to 174 (RSGFVSIIGR…VELVRKALPQ (168 aa)) enclose the Era-type G domain. The interval 15–22 (GRPNVGKS) is G1. 15–22 (GRPNVGKS) contacts GTP. Positions 41 to 45 (QTTRN) are G2. The segment at 62–65 (DTPG) is G3. GTP is bound by residues 62–66 (DTPGI) and 124–127 (NKVD). Residues 124-127 (NKVD) are G4. Positions 153–155 (ISA) are G5. A KH type-2 domain is found at 205-283 (TRDEVPYATA…FLELFVRVRK (79 aa)).

It belongs to the TRAFAC class TrmE-Era-EngA-EngB-Septin-like GTPase superfamily. Era GTPase family. Monomer.

Its subcellular location is the cytoplasm. It localises to the cell inner membrane. Functionally, an essential GTPase that binds both GDP and GTP, with rapid nucleotide exchange. Plays a role in 16S rRNA processing and 30S ribosomal subunit biogenesis and possibly also in cell cycle regulation and energy metabolism. The protein is GTPase Era of Geobacter metallireducens (strain ATCC 53774 / DSM 7210 / GS-15).